The following is a 62-amino-acid chain: UPF0434 protein Arad_4458 (62 aa).

Belongs to the UPF0434 family.

This Rhizobium rhizogenes (strain K84 / ATCC BAA-868) (Agrobacterium radiobacter) protein is UPF0434 protein Arad_4458.